A 126-amino-acid polypeptide reads, in one-letter code: Anti-adapter protein IraD (126 aa).

The protein belongs to the GpW/Gp25 family. IraD subfamily. As to quaternary structure, interacts with RssB.

It is found in the cytoplasm. Inhibits RpoS proteolysis by regulating RssB activity, thereby increasing the stability of the sigma stress factor RpoS during oxidative stress. Its effect on RpoS stability is due to its interaction with RssB, which probably blocks the interaction of RssB with RpoS, and the consequent delivery of the RssB-RpoS complex to the ClpXP protein degradation pathway. This chain is Anti-adapter protein IraD, found in Salmonella paratyphi A (strain ATCC 9150 / SARB42).